A 231-amino-acid chain; its full sequence is DNA mismatch repair protein MutH (231 aa).

This sequence belongs to the MutH family.

The protein localises to the cytoplasm. In terms of biological role, sequence-specific endonuclease that cleaves unmethylated GATC sequences. It is involved in DNA mismatch repair. The sequence is that of DNA mismatch repair protein MutH from Salmonella enteritidis PT4 (strain P125109).